The sequence spans 237 residues: Ribose-5-phosphate isomerase A (237 aa).

Substrate contacts are provided by residues 33-36, 90-93, and 103-106; these read TGST, DGAD, and KGGG. The active-site Proton acceptor is the glutamate 112. A substrate-binding site is contributed by lysine 130.

It belongs to the ribose 5-phosphate isomerase family. As to quaternary structure, homodimer.

The catalysed reaction is aldehydo-D-ribose 5-phosphate = D-ribulose 5-phosphate. Its pathway is carbohydrate degradation; pentose phosphate pathway; D-ribose 5-phosphate from D-ribulose 5-phosphate (non-oxidative stage): step 1/1. Its function is as follows. Catalyzes the reversible conversion of ribose-5-phosphate to ribulose 5-phosphate. The polypeptide is Ribose-5-phosphate isomerase A (Gloeothece citriformis (strain PCC 7424) (Cyanothece sp. (strain PCC 7424))).